We begin with the raw amino-acid sequence, 528 residues long: O-methylsterigmatocystin oxidoreductase (528 aa).

Cysteine 440 serves as a coordination point for heme.

This sequence belongs to the cytochrome P450 family. Heme serves as cofactor.

It catalyses the reaction 8-O-methylsterigmatocystin + 2 reduced [NADPH--hemoprotein reductase] + 2 O2 = aflatoxin B1 + methanol + 2 oxidized [NADPH--hemoprotein reductase] + CO2 + H2O + 2 H(+). It carries out the reaction 8-O-methyldihydrosterigmatocystin + 2 reduced [NADPH--hemoprotein reductase] + 2 O2 = aflatoxin B2 + methanol + 2 oxidized [NADPH--hemoprotein reductase] + CO2 + H2O + 2 H(+). Its pathway is mycotoxin biosynthesis; aflatoxin biosynthesis. Functionally, converts O-methylsterigmatocystin (OMST) to aflatoxin B1 and converts dihydro-O-methylsterigmatocystin (DHOMST) to aflatoxin B2 in the aflatoxin biosynthesis pathway. This is O-methylsterigmatocystin oxidoreductase (ordA) from Aspergillus flavus.